We begin with the raw amino-acid sequence, 2101 residues long: General transcription factor 3C polypeptide 1 (2101 aa).

Over residues 473–487 the composition is skewed to acidic residues; sequence GEEAFLSDSESEEES. Disordered regions lie at residues 473–574 and 588–609; these read GEEA…MDSH and NPKEGGGSQKGGRHGSSQDKPH. The span at 492–503 shows a compositional bias: basic residues; sequence GKRRGRGSRGHA. Residues 504-513 show a composition bias toward low complexity; it reads RASGDAGSGS. K534 participates in a covalent cross-link: Glycyl lysine isopeptide (Lys-Gly) (interchain with G-Cter in SUMO2). S667 bears the Phosphoserine mark. Disordered stretches follow at residues 718–772 and 820–864; these read STAN…EKMG and GEQP…SSWE. Residues 747 to 759 show a composition bias toward polar residues; sequence RSANSDPNTSSKP. Composition is skewed to basic and acidic residues over residues 760–771 and 826–836; these read ESTRVKKTDEKM and HSERKTGKQES. Residues K770 and K833 each participate in a glycyl lysine isopeptide (Lys-Gly) (interchain with G-Cter in SUMO2) cross-link. S1063 bears the Phosphoserine mark. Residues 1186 to 1196 show a composition bias toward basic and acidic residues; that stretch reads EEQFELDREPT. Disordered stretches follow at residues 1186–1239, 1598–1627, and 1822–1923; these read EEQF…KKLR, KSLGKDGGLDDDEEEEDLDEGSGTKRQGVE, and DTKA…QENQ. T1196 is modified (phosphothreonine). Residues 1199 to 1215 show a composition bias toward basic residues; that stretch reads RNRKVRGGKSQKRKRLK. The span at 1229 to 1239 shows a compositional bias: basic and acidic residues; the sequence is EHPEAKSKKLR. The span at 1606–1617 shows a compositional bias: acidic residues; that stretch reads LDDDEEEEDLDE. The segment covering 1822–1831 has biased composition (basic and acidic residues); that stretch reads DTKASGDDSQ. S1854 and S1890 each carry phosphoserine. Over residues 1900–1910 the composition is skewed to low complexity; the sequence is EAQAPAQLAAP.

Belongs to the TFIIIC subunit 1 family. Part of the TFIIIC subcomplex TFIIIC2, consisting of six subunits, GTF3C1, GTF3C2, GTF3C3, GTF3C4, GTF3C5 and GTF3C6. Interacts with IGHMBP2. Interacts with MAF1.

The protein localises to the nucleus. Functionally, required for RNA polymerase III-mediated transcription. Component of TFIIIC that initiates transcription complex assembly on tRNA and is required for transcription of 5S rRNA and other stable nuclear and cytoplasmic RNAs. Binds to the box B promoter element. This chain is General transcription factor 3C polypeptide 1 (Gtf3c1), found in Mus musculus (Mouse).